We begin with the raw amino-acid sequence, 418 residues long: Fumarylacetoacetase (418 aa).

D127 is a binding site for Ca(2+). H134 acts as the Proton acceptor in catalysis. Residues E200, E202, and D235 each contribute to the Ca(2+) site. Residues D235, K255, and T259 each contribute to the Mg(2+) site.

The protein belongs to the FAH family. Ca(2+) is required as a cofactor. Requires Mg(2+) as cofactor. Highly expressed in the intestine and the hypodermis.

The enzyme catalyses 4-fumarylacetoacetate + H2O = acetoacetate + fumarate + H(+). The protein operates within amino-acid degradation; L-phenylalanine degradation; acetoacetate and fumarate from L-phenylalanine: step 6/6. Functionally, fumarylacetoacetase involved in the tyrosine degradation pathway. The protein is Fumarylacetoacetase of Caenorhabditis elegans.